Reading from the N-terminus, the 287-residue chain is Pyridoxal kinase PdxY (287 aa).

Substrate is bound by residues S10 and 45–46; that span reads TQ. ATP contacts are provided by residues D112, A144, E149, K182, and 209-212; that span reads RPLV. D224 provides a ligand contact to substrate.

The protein belongs to the pyridoxine kinase family. PdxY subfamily. In terms of assembly, homodimer. Mg(2+) is required as a cofactor.

It catalyses the reaction pyridoxal + ATP = pyridoxal 5'-phosphate + ADP + H(+). The protein operates within cofactor metabolism; pyridoxal 5'-phosphate salvage; pyridoxal 5'-phosphate from pyridoxal: step 1/1. In terms of biological role, pyridoxal kinase involved in the salvage pathway of pyridoxal 5'-phosphate (PLP). Catalyzes the phosphorylation of pyridoxal to PLP. This chain is Pyridoxal kinase PdxY, found in Shigella dysenteriae serotype 1 (strain Sd197).